Here is a 267-residue protein sequence, read N- to C-terminus: Putative carbamate hydrolase RutD (267 aa).

In terms of domain architecture, AB hydrolase-1 spans 14-115; the sequence is PVMVMISGLG…SALVIINGWL (102 aa).

It belongs to the AB hydrolase superfamily. Hydrolase RutD family.

The enzyme catalyses carbamate + 2 H(+) = NH4(+) + CO2. Functionally, involved in pyrimidine catabolism. May facilitate the hydrolysis of carbamate, a reaction that can also occur spontaneously. The polypeptide is Putative carbamate hydrolase RutD (Cronobacter turicensis (strain DSM 18703 / CCUG 55852 / LMG 23827 / z3032)).